Reading from the N-terminus, the 365-residue chain is Sulfate/thiosulfate import ATP-binding protein CysA (365 aa).

The region spanning 3–237 (IEIANIKKSF…PATRFVLEFM (235 aa)) is the ABC transporter domain. 35-42 (GPSGSGKT) contributes to the ATP binding site.

The protein belongs to the ABC transporter superfamily. Sulfate/tungstate importer (TC 3.A.1.6) family. The complex is composed of two ATP-binding proteins (CysA), two transmembrane proteins (CysT and CysW) and a solute-binding protein (CysP).

Its subcellular location is the cell inner membrane. It carries out the reaction sulfate(out) + ATP + H2O = sulfate(in) + ADP + phosphate + H(+). The catalysed reaction is thiosulfate(out) + ATP + H2O = thiosulfate(in) + ADP + phosphate + H(+). Part of the ABC transporter complex CysAWTP involved in sulfate/thiosulfate import. Responsible for energy coupling to the transport system. In Escherichia coli O157:H7, this protein is Sulfate/thiosulfate import ATP-binding protein CysA.